The primary structure comprises 137 residues: NADH-quinone oxidoreductase subunit A 1 (137 aa).

The next 3 helical transmembrane spans lie at 14–34, 66–86, and 95–115; these read FAAF…VSAL, FYLV…LFAW, and WAGL…LVYL.

It belongs to the complex I subunit 3 family. As to quaternary structure, NDH-1 is composed of 13 different subunits. Subunits NuoA, H, J, K, L, M, N constitute the membrane sector of the complex.

The protein resides in the cell inner membrane. The catalysed reaction is a quinone + NADH + 5 H(+)(in) = a quinol + NAD(+) + 4 H(+)(out). Its function is as follows. NDH-1 shuttles electrons from NADH, via FMN and iron-sulfur (Fe-S) centers, to quinones in the respiratory chain. The immediate electron acceptor for the enzyme in this species is believed to be ubiquinone. Couples the redox reaction to proton translocation (for every two electrons transferred, four hydrogen ions are translocated across the cytoplasmic membrane), and thus conserves the redox energy in a proton gradient. In Pseudomonas paraeruginosa (strain DSM 24068 / PA7) (Pseudomonas aeruginosa (strain PA7)), this protein is NADH-quinone oxidoreductase subunit A 1.